Here is a 252-residue protein sequence, read N- to C-terminus: Imidazole glycerol phosphate synthase subunit HisF (252 aa).

Residues Asp11 and Asp130 contribute to the active site.

The protein belongs to the HisA/HisF family. Heterodimer of HisH and HisF.

The protein localises to the cytoplasm. It catalyses the reaction 5-[(5-phospho-1-deoxy-D-ribulos-1-ylimino)methylamino]-1-(5-phospho-beta-D-ribosyl)imidazole-4-carboxamide + L-glutamine = D-erythro-1-(imidazol-4-yl)glycerol 3-phosphate + 5-amino-1-(5-phospho-beta-D-ribosyl)imidazole-4-carboxamide + L-glutamate + H(+). Its pathway is amino-acid biosynthesis; L-histidine biosynthesis; L-histidine from 5-phospho-alpha-D-ribose 1-diphosphate: step 5/9. Its function is as follows. IGPS catalyzes the conversion of PRFAR and glutamine to IGP, AICAR and glutamate. The HisF subunit catalyzes the cyclization activity that produces IGP and AICAR from PRFAR using the ammonia provided by the HisH subunit. The polypeptide is Imidazole glycerol phosphate synthase subunit HisF (Bacillus cereus (strain AH187)).